We begin with the raw amino-acid sequence, 514 residues long: GTPase Obg (514 aa).

Positions 2 to 159 (ATFVDRVTVH…GDILLELKTV (158 aa)) constitute an Obg domain. The segment at 62-88 (RRPHRSSGNGGFGMGDHRSGHTGEDLE) is disordered. Positions 76 to 85 (GDHRSGHTGE) are enriched in basic and acidic residues. Residues 160–336 (ADIALVGYPS…LSFALAELVE (177 aa)) form the OBG-type G domain. Residues 166 to 173 (GYPSAGKS), 191 to 195 (FTTLH), 212 to 215 (DVPG), 288 to 291 (NKID), and 317 to 319 (STV) each bind GTP. Mg(2+) is bound by residues Ser173 and Thr193. An OCT domain is found at 356-440 (PKTVDDSGFV…ENGVVFDWEP (85 aa)).

It belongs to the TRAFAC class OBG-HflX-like GTPase superfamily. OBG GTPase family. As to quaternary structure, monomer. Mg(2+) is required as a cofactor.

Its subcellular location is the cytoplasm. Functionally, an essential GTPase which binds GTP, GDP and possibly (p)ppGpp with moderate affinity, with high nucleotide exchange rates and a fairly low GTP hydrolysis rate. Plays a role in control of the cell cycle, stress response, ribosome biogenesis and in those bacteria that undergo differentiation, in morphogenesis control. The chain is GTPase Obg from Leifsonia xyli subsp. xyli (strain CTCB07).